Reading from the N-terminus, the 136-residue chain is Small ribosomal subunit protein uS19 (136 aa).

It belongs to the universal ribosomal protein uS19 family.

Functionally, protein S19 forms a complex with S13 that binds strongly to the 16S ribosomal RNA. In Methanothrix thermoacetophila (strain DSM 6194 / JCM 14653 / NBRC 101360 / PT) (Methanosaeta thermophila), this protein is Small ribosomal subunit protein uS19.